Here is a 165-residue protein sequence, read N- to C-terminus: MKNIAVIPGSFDPITLGHLDIIKRSAGLFDVVHVSVLNNASKQGFFTIEERIEMISEAVKDIPNVEVEYFQGLLVDYCNKVGAKQIVRGLRAVSDFEYEMQLTSMNKKLDDDLETLYMMTNNQYSFISSSMTKDVAKYGGDVSSIVPPNVELALKQKYAEINRRP.

Position 10 (Ser10) interacts with substrate. ATP contacts are provided by residues 10–11 and His18; that span reads SF. Lys42, Leu74, and Arg88 together coordinate substrate. ATP is bound by residues 89 to 91, Glu99, and 124 to 130; these read GLR and YSFISSS.

It belongs to the bacterial CoaD family. In terms of assembly, homohexamer. Requires Mg(2+) as cofactor.

Its subcellular location is the cytoplasm. The enzyme catalyses (R)-4'-phosphopantetheine + ATP + H(+) = 3'-dephospho-CoA + diphosphate. The protein operates within cofactor biosynthesis; coenzyme A biosynthesis; CoA from (R)-pantothenate: step 4/5. In terms of biological role, reversibly transfers an adenylyl group from ATP to 4'-phosphopantetheine, yielding dephospho-CoA (dPCoA) and pyrophosphate. The protein is Phosphopantetheine adenylyltransferase of Macrococcus caseolyticus (strain JCSC5402) (Macrococcoides caseolyticum).